Reading from the N-terminus, the 1310-residue chain is MAIWSTRKVGLDNLRISQLLNFRGFDPSALVTKLTDPFSLQRLLTLNQSRSPPMVNRLKDSRKRRAAVVCRIRDTRDGWFSSLSSLTSSVIGLFQISVKLPHEPYKIQVMVSSQEQVQDVRQSIVELPSTFQYTCFHLEFNGKRINDFVELSEVEGLKADSEIVLVEDPYTEKEARMHVVRFRDLVGAAGDRSDNLHGLNAGLSLHDAVTAEAATDDVKEHSLSKYDIAASPSLETILPRAEAPLPKTVKSISLSAWNPPPYHLRQKGHLLYLQVTTNEGEQFQITSHVSGFYVNKCSNHKFDPLPRTTPKKVSAHSLLTLISKLSPSFNSAFEALQESNNKKDLLTTFPFQNAIPNSPWLVTPPSSNPNSHQADITRSQESYLVSGVDNAETLRDWNEEFQTTRELPRETVQDRVFRERLTSKLFADYNEAAARGAVLVARGEVAPLNPTEERDAQIFVYNNIFYSFGADGVGTFVSEGGDEAARVAVGKDVLGIKAVNQLDINGLFTPGTVVVDYLGKRIVGQSIVPGIFKQREPGEHQIDYGGVEGKDVVATHPDFVSVFEKMSKALRIKKHPVWDKEGKRHDLEGSVETKGLLGTDGRKYVLDLYRVTPLDVVWQEEPGSEDYPHRMSVLRLELVEAYWRSKMSQYVKAEVERRRAAKAQEDAANKEQPSETTESKEGESEEKAEEALDQERVDISGFQLALNPDVCSGQVPQTEEEKKQWAEDEKEVRDACEFLRSKVIPELIQDLHDGDVGFPMDGRSLSQLLHKRGINIRYLGKLAQLSKEKGSRLEALTTLLVQEMIARAFKHIANRYLRNVPAPFVASCVAHLLNCLLGADVNPKPSAEIDASLREIYPEGDFSFEKVTPETLRAEVEKQVTVRYRYTLETEWFSSLRHLQLLRDIAIKLGLQLGARDYAFTKAQLPAKVPVANGVNGASHDESKKKKKKGGDSKSPSRAVVEEKPVVSIVPDDIVNVVPLVKDASPRSSLAEEALEAGRISLMQNQKQLGQELILESLSLHEQIYGILHPEVAKLYHQLSMLYYQTDEKEAAVELARKAVIVTERTLGVDSADTILAYLNLSLFEHASGNTKTALVYIKHAMDLWKIIYGSNHPDSITTMNNAAVMLQHLKQYSDSRKWFEASLAVCESLFGKQSINTATILFQLAQALALDQDSKGAVGKMRDAYNIFLNQLGPNDRNTKEAETWLEQLTQNAVSIAKHAKDIQARRLRRINMNPRVTTLGTKVQPQVGQTAPEASGAKGAANASMDSRSIDELLKFIEGGDATSSRSKQKKRAAASNPKLRGSKKSSA.

The region spanning 375 to 619 (DITRSQESYL…RVTPLDVVWQ (245 aa)) is the Clu domain. Residues 662-682 (KAQEDAANKEQPSETTESKEG) show a composition bias toward basic and acidic residues. 2 disordered regions span residues 662 to 692 (KAQE…EEAL) and 931 to 960 (VANG…SRAV). TPR repeat units follow at residues 1033–1066 (AKLY…TERT), 1075–1108 (ILAY…WKII), and 1117–1150 (ITTM…CESL). 2 disordered regions span residues 1245–1266 (VQPQ…ANAS) and 1281–1310 (GGDA…KSSA).

It belongs to the CLU family. In terms of assembly, may associate with the eukaryotic translation initiation factor 3 (eIF-3) complex.

The protein localises to the cytoplasm. Functionally, mRNA-binding protein involved in proper cytoplasmic distribution of mitochondria. This is Clustered mitochondria protein homolog from Aspergillus fumigatus (strain CBS 144.89 / FGSC A1163 / CEA10) (Neosartorya fumigata).